The primary structure comprises 445 residues: Adenylyltransferase and sulfurtransferase MOCS3 (445 aa).

Residues 49–70 (LPPSAAAEVEPTGSPSSSSSAA) form a disordered region. Residues glycine 106, aspartate 127, 134–138 (DNLHR), lysine 151, and 170–171 (NN) contribute to the ATP site. 2 residues coordinate Zn(2+): cysteine 211 and cysteine 214. Cysteine 228 functions as the Glycyl thioester intermediate; for adenylyltransferase activity in the catalytic mechanism. Cysteine 286 and cysteine 289 together coordinate Zn(2+). One can recognise a Rhodanese domain in the interval 342–443 (SGRPHLLVDV…WAKEVDPSFL (102 aa)). The Cysteine persulfide intermediate; for sulfurtransferase activity role is filled by cysteine 403.

It in the N-terminal section; belongs to the HesA/MoeB/ThiF family. UBA4 subfamily. Requires Zn(2+) as cofactor.

The protein resides in the cytoplasm. Its subcellular location is the cytosol. It carries out the reaction [molybdopterin-synthase sulfur-carrier protein]-C-terminal Gly-Gly + ATP + H(+) = [molybdopterin-synthase sulfur-carrier protein]-C-terminal Gly-Gly-AMP + diphosphate. The enzyme catalyses [molybdopterin-synthase sulfur-carrier protein]-C-terminal Gly-Gly-AMP + S-sulfanyl-L-cysteinyl-[cysteine desulfurase] + AH2 = [molybdopterin-synthase sulfur-carrier protein]-C-terminal-Gly-aminoethanethioate + L-cysteinyl-[cysteine desulfurase] + A + AMP + 2 H(+). It functions in the pathway tRNA modification; 5-methoxycarbonylmethyl-2-thiouridine-tRNA biosynthesis. Its pathway is cofactor biosynthesis; molybdopterin biosynthesis. Functionally, plays a central role in 2-thiolation of mcm(5)S(2)U at tRNA wobble positions of cytosolic tRNA(Lys), tRNA(Glu) and tRNA(Gln). Also essential during biosynthesis of the molybdenum cofactor. Acts by mediating the C-terminal thiocarboxylation of sulfur carriers URM1 and MOCS2A. Its N-terminus first activates URM1 and MOCS2A as acyl-adenylates (-COAMP), then the persulfide sulfur on the catalytic cysteine is transferred to URM1 and MOCS2A to form thiocarboxylation (-COSH) of their C-terminus. The reaction probably involves hydrogen sulfide that is generated from the persulfide intermediate and that acts as a nucleophile towards URM1 and MOCS2A. Subsequently, a transient disulfide bond is formed. Does not use thiosulfate as sulfur donor; NFS1 probably acting as a sulfur donor for thiocarboxylation reactions. The protein is Adenylyltransferase and sulfurtransferase MOCS3 of Oryza sativa subsp. japonica (Rice).